The following is a 340-amino-acid chain: Ketol-acid reductoisomerase (NADP(+)) (340 aa).

One can recognise a KARI N-terminal Rossmann domain in the interval 3 to 182 (VTMYYEEDVE…GCARVGIIET (180 aa)). Residues 26-29 (YGSQ), Arg-49, Ser-53, and 83-86 (DELQ) each bind NADP(+). His-108 is a catalytic residue. Gly-134 is a binding site for NADP(+). A KARI C-terminal knotted domain is found at 183-328 (TFKEETEEDL…AELRKAMPFT (146 aa)). 4 residues coordinate Mg(2+): Asp-191, Glu-195, Glu-227, and Glu-231. Ser-252 is a substrate binding site.

It belongs to the ketol-acid reductoisomerase family. Mg(2+) serves as cofactor.

It catalyses the reaction (2R)-2,3-dihydroxy-3-methylbutanoate + NADP(+) = (2S)-2-acetolactate + NADPH + H(+). It carries out the reaction (2R,3R)-2,3-dihydroxy-3-methylpentanoate + NADP(+) = (S)-2-ethyl-2-hydroxy-3-oxobutanoate + NADPH + H(+). Its pathway is amino-acid biosynthesis; L-isoleucine biosynthesis; L-isoleucine from 2-oxobutanoate: step 2/4. It functions in the pathway amino-acid biosynthesis; L-valine biosynthesis; L-valine from pyruvate: step 2/4. Its function is as follows. Involved in the biosynthesis of branched-chain amino acids (BCAA). Catalyzes an alkyl-migration followed by a ketol-acid reduction of (S)-2-acetolactate (S2AL) to yield (R)-2,3-dihydroxy-isovalerate. In the isomerase reaction, S2AL is rearranged via a Mg-dependent methyl migration to produce 3-hydroxy-3-methyl-2-ketobutyrate (HMKB). In the reductase reaction, this 2-ketoacid undergoes a metal-dependent reduction by NADPH to yield (R)-2,3-dihydroxy-isovalerate. The protein is Ketol-acid reductoisomerase (NADP(+)) of Lactococcus lactis subsp. cremoris (strain SK11).